Consider the following 165-residue polypeptide: Ribosome maturation factor RimM (165 aa).

The PRC barrel domain occupies 90–161 (EDEYFIVDLV…LITIRPSGEW (72 aa)).

Belongs to the RimM family. Binds ribosomal protein uS19.

The protein localises to the cytoplasm. Functionally, an accessory protein needed during the final step in the assembly of 30S ribosomal subunit, possibly for assembly of the head region. Essential for efficient processing of 16S rRNA. May be needed both before and after RbfA during the maturation of 16S rRNA. It has affinity for free ribosomal 30S subunits but not for 70S ribosomes. In Clostridium perfringens (strain SM101 / Type A), this protein is Ribosome maturation factor RimM.